Reading from the N-terminus, the 316-residue chain is HPr kinase/phosphorylase (316 aa).

Residues H141 and K162 contribute to the active site. ATP is bound at residue 156–163 (GESGVGKS). S163 is a Mg(2+) binding site. Residue D180 is the Proton acceptor; for phosphorylation activity. Proton donor; for dephosphorylation activity of the active site. Positions 204–213 (MEIRGIGIID) are important for the catalytic mechanism of both phosphorylation and dephosphorylation. Residue E205 participates in Mg(2+) binding. R246 is a catalytic residue. The segment at 267 to 272 (PVKVGR) is important for the catalytic mechanism of dephosphorylation.

Belongs to the HPrK/P family. As to quaternary structure, homohexamer. It depends on Mg(2+) as a cofactor.

The enzyme catalyses [HPr protein]-L-serine + ATP = [HPr protein]-O-phospho-L-serine + ADP + H(+). The catalysed reaction is [HPr protein]-O-phospho-L-serine + phosphate + H(+) = [HPr protein]-L-serine + diphosphate. Its function is as follows. Catalyzes the ATP- as well as the pyrophosphate-dependent phosphorylation of a specific serine residue in HPr, a phosphocarrier protein of the phosphoenolpyruvate-dependent sugar phosphotransferase system (PTS). HprK/P also catalyzes the pyrophosphate-producing, inorganic phosphate-dependent dephosphorylation (phosphorolysis) of seryl-phosphorylated HPr (P-Ser-HPr). The two antagonistic activities of HprK/P are regulated by several intracellular metabolites, which change their concentration in response to the absence or presence of rapidly metabolisable carbon sources (glucose, fructose, etc.) in the growth medium. Therefore, by controlling the phosphorylation state of HPr, HPrK/P is a sensor enzyme that plays a major role in the regulation of carbon metabolism and sugar transport: it mediates carbon catabolite repression (CCR), and regulates PTS-catalyzed carbohydrate uptake and inducer exclusion. This is HPr kinase/phosphorylase from Lactobacillus delbrueckii subsp. bulgaricus (strain ATCC 11842 / DSM 20081 / BCRC 10696 / JCM 1002 / NBRC 13953 / NCIMB 11778 / NCTC 12712 / WDCM 00102 / Lb 14).